A 437-amino-acid chain; its full sequence is Nickel-cobalt-cadmium resistance protein NccC (437 aa).

Positions 1 to 48 are cleaved as a signal peptide; the sequence is MGAVLKAEANIFRSHPFRPMNQATPKKLRSAPCIGVALLLMATGSIQA.

Belongs to the outer membrane factor (OMF) (TC 1.B.17) family.

Component of the NCC cation-efflux system that confers resistance to nickel, cobalt and cadmium. In Alcaligenes xylosoxydans xylosoxydans (Achromobacter xylosoxidans), this protein is Nickel-cobalt-cadmium resistance protein NccC (nccC).